A 119-amino-acid polypeptide reads, in one-letter code: Large ribosomal subunit protein bL12 (119 aa).

The protein belongs to the bacterial ribosomal protein bL12 family. In terms of assembly, homodimer. Part of the ribosomal stalk of the 50S ribosomal subunit. Forms a multimeric L10(L12)X complex, where L10 forms an elongated spine to which 2 to 4 L12 dimers bind in a sequential fashion. Binds GTP-bound translation factors.

Functionally, forms part of the ribosomal stalk which helps the ribosome interact with GTP-bound translation factors. Is thus essential for accurate translation. This chain is Large ribosomal subunit protein bL12, found in Bacillus anthracis (strain A0248).